A 373-amino-acid polypeptide reads, in one-letter code: Anhydro-N-acetylmuramic acid kinase (373 aa).

Residue 13 to 20 (GTSMDGID) coordinates ATP.

This sequence belongs to the anhydro-N-acetylmuramic acid kinase family.

It carries out the reaction 1,6-anhydro-N-acetyl-beta-muramate + ATP + H2O = N-acetyl-D-muramate 6-phosphate + ADP + H(+). It participates in amino-sugar metabolism; 1,6-anhydro-N-acetylmuramate degradation. Its pathway is cell wall biogenesis; peptidoglycan recycling. Its function is as follows. Catalyzes the specific phosphorylation of 1,6-anhydro-N-acetylmuramic acid (anhMurNAc) with the simultaneous cleavage of the 1,6-anhydro ring, generating MurNAc-6-P. Is required for the utilization of anhMurNAc either imported from the medium or derived from its own cell wall murein, and thus plays a role in cell wall recycling. The chain is Anhydro-N-acetylmuramic acid kinase from Brucella abortus (strain 2308).